A 130-amino-acid polypeptide reads, in one-letter code: Small ribosomal subunit protein uS9 (130 aa).

The protein belongs to the universal ribosomal protein uS9 family.

This is Small ribosomal subunit protein uS9 from Buchnera aphidicola subsp. Baizongia pistaciae (strain Bp).